A 274-amino-acid polypeptide reads, in one-letter code: Peroxiredoxin-4 (274 aa).

The first 40 residues, 1–40 (MEARSKLLDGTTASRRWTRKLVLLLPPLLLFLLRTESLQG), serve as a signal peptide directing secretion. One can recognise a Thioredoxin domain in the interval 82–240 (AKISKPAPYW…TLRLVQAFQY (159 aa)). Catalysis depends on C127, which acts as the Cysteine sulfenic acid (-SOH) intermediate.

Belongs to the peroxiredoxin family. AhpC/Prx1 subfamily. As to quaternary structure, homodimer; disulfide-linked, upon oxidation. 5 homodimers assemble to form a ring-like decamer. The enzyme can be inactivated by further oxidation of the cysteine sulfenic acid (C(P)-SOH) to sulphinic acid (C(P)-SO2H) and sulphonic acid (C(P)-SO3H) instead of its condensation to a disulfide bond.

It localises to the cytoplasm. The protein localises to the endoplasmic reticulum. The catalysed reaction is a hydroperoxide + [thioredoxin]-dithiol = an alcohol + [thioredoxin]-disulfide + H2O. In terms of biological role, thiol-specific peroxidase that catalyzes the reduction of hydrogen peroxide and organic hydroperoxides to water and alcohols, respectively. Plays a role in cell protection against oxidative stress by detoxifying peroxides and as sensor of hydrogen peroxide-mediated signaling events. Regulates the activation of NF-kappa-B in the cytosol by a modulation of I-kappa-B-alpha phosphorylation. This Mus musculus (Mouse) protein is Peroxiredoxin-4 (Prdx4).